Consider the following 370-residue polypeptide: 2-oxoisovalerate dehydrogenase subunit beta, mitochondrial (370 aa).

The N-terminal 25 residues, Met1–Arg25, are a transit peptide targeting the mitochondrion. Tyr130 serves as a coordination point for thiamine diphosphate. Positions 156, 158, 159, and 209 each coordinate K(+).

Heterotetramer of 2 alpha and 2 beta chains. Thiamine diphosphate is required as a cofactor.

It is found in the mitochondrion matrix. The enzyme catalyses N(6)-[(R)-lipoyl]-L-lysyl-[protein] + 3-methyl-2-oxobutanoate + H(+) = N(6)-[(R)-S(8)-2-methylpropanoyldihydrolipoyl]-L-lysyl-[protein] + CO2. In terms of biological role, the branched-chain alpha-keto dehydrogenase complex catalyzes the overall conversion of alpha-keto acids to acyl-CoA and CO(2). It contains multiple copies of three enzymatic components: branched-chain alpha-keto acid decarboxylase (E1), lipoamide acyltransferase (E2) and lipoamide dehydrogenase (E3). In Dictyostelium discoideum (Social amoeba), this protein is 2-oxoisovalerate dehydrogenase subunit beta, mitochondrial (bkdB).